Consider the following 506-residue polypeptide: Steroid (22S)-hydroxylase (506 aa).

A helical membrane pass occupies residues 12 to 32; it reads LLFFLPFILLALLTFYTTTVA. Residue C449 participates in heme binding.

Belongs to the cytochrome P450 family. Heme serves as cofactor.

Its subcellular location is the membrane. The catalysed reaction is a C28-steroid + reduced [NADPH--hemoprotein reductase] + O2 = a (22S)-22-hydroxy C28-steroid + oxidized [NADPH--hemoprotein reductase] + H2O + H(+). The enzyme catalyses campesterol + reduced [NADPH--hemoprotein reductase] + O2 = (22S)-22-hydroxycampesterol + oxidized [NADPH--hemoprotein reductase] + H2O + H(+). It carries out the reaction campestanol + reduced [NADPH--hemoprotein reductase] + O2 = 6-deoxycathasterone + oxidized [NADPH--hemoprotein reductase] + H2O + H(+). The protein operates within plant hormone biosynthesis; brassinosteroid biosynthesis. Its function is as follows. Catalyzes the C22-alpha-hydroxylation step in brassinosteroid biosynthesis, which is the rate-limiting step in this biosynthetic pathway. Catalyzes the conversion of campesterol (CR) to (22S)-22-hydroxycampesterol (22-OHCR, 22-hydroxyCR) and of campestanol (CN) to 6-deoxocathasterone (6-deoxoCT). This is Steroid (22S)-hydroxylase from Oryza sativa subsp. indica (Rice).